Here is a 459-residue protein sequence, read N- to C-terminus: ATP-dependent 6-phosphofructokinase (459 aa).

ATP is bound by residues Gly-89, 154–155 (RG), and 179–182 (GDGG). Asp-180 lines the Mg(2+) pocket. Residues 208–210 (TID), 253–255 (MGR), Glu-309, and 368–371 (YAIR) each bind substrate. Catalysis depends on Asp-210, which acts as the Proton acceptor.

The protein belongs to the phosphofructokinase type A (PFKA) family. PPi-dependent PFK group II subfamily. Atypical ATP-dependent clade 'X' sub-subfamily. In terms of assembly, homodimer. Requires Mg(2+) as cofactor.

Its subcellular location is the cytoplasm. It carries out the reaction beta-D-fructose 6-phosphate + ATP = beta-D-fructose 1,6-bisphosphate + ADP + H(+). Its pathway is carbohydrate degradation; glycolysis; D-glyceraldehyde 3-phosphate and glycerone phosphate from D-glucose: step 3/4. Its activity is regulated as follows. AMP causes 20-40% inhibition and diphosphate causes 20-50% inhibition. ADP, citrate, PEP and FBP have no effect. Catalyzes the phosphorylation of D-fructose 6-phosphate to fructose 1,6-bisphosphate by ATP, the first committing step of glycolysis. This chain is ATP-dependent 6-phosphofructokinase, found in Amycolatopsis methanolica.